The primary structure comprises 445 residues: Polyadenylate-binding protein RBP47A (445 aa).

The segment covering 1 to 12 (MQTPNNNGSTDS) has biased composition (polar residues). Disordered stretches follow at residues 1–45 (MQTP…WQQQ) and 93–117 (AAYQ…GGDD). Positions 22–35 (TPPPPLQQSTPPPQ) are enriched in pro residues. 2 stretches are compositionally biased toward low complexity: residues 36–45 (QQQQQQWQQQ) and 93–108 (AAYQ…SQQQ). RRM domains lie at 119-199 (KTLW…WASF), 213-292 (LSIF…IATP), and 327-399 (STIF…WGRS).

Belongs to the polyadenylate-binding RBP47 family. Interacts with the poly(A) tail of mRNA in nucleus. As to expression, expressed in leaves, stems, flowers, and seedlings.

The protein localises to the nucleus. Its subcellular location is the cytoplasmic granule. Functionally, heterogeneous nuclear ribonucleoprotein (hnRNP)-protein binding the poly(A) tail of mRNA and probably involved in some steps of pre-mRNA maturation. This is Polyadenylate-binding protein RBP47A (RBP47A) from Arabidopsis thaliana (Mouse-ear cress).